A 747-amino-acid polypeptide reads, in one-letter code: ATPase family gene 2 protein homolog B (747 aa).

Met-1 is modified (N-acetylmethionine). ATP contacts are provided by residues Gly-234–Thr-241 and Gly-500–Thr-507.

It belongs to the AAA ATPase family. AFG2 subfamily. Part of the 55LCC heterohexameric ATPase complex composed at least of AIRIM, AFG2A, AFG2B and CINP. Associates with pre-60S ribosomal particles. Expressed in neurons; also expressed at lower level in astrocytes, oligodendrocytes and microglia.

The protein localises to the cytoplasm. It is found in the cytoskeleton. Its subcellular location is the spindle. It localises to the nucleus. It carries out the reaction ATP + H2O = ADP + phosphate + H(+). In the context of 55LCC heterohexameric ATPase complex, the ATPase activity is stimulated by DNA binding and inhibited in presence of RNA. ATP-dependent chaperone part of the 55LCC heterohexameric ATPase complex which is chromatin-associated and promotes replisome proteostasis to maintain replication fork progression and genome stability. Required for replication fork progression, sister chromatid cohesion, and chromosome stability. The ATPase activity is specifically enhanced by replication fork DNA and is coupled to cysteine protease-dependent cleavage of replisome substrates in response to replication fork damage. Uses ATPase activity to process replisome substrates in S-phase, facilitating their proteolytic turnover from chromatin to ensure DNA replication and mitotic fidelity. Plays an essential role in the cytoplasmic maturation steps of pre-60S ribosomal particles by promoting the release of shuttling protein RSL24D1/RLP24 from the pre-ribosomal particles. The protein is ATPase family gene 2 protein homolog B (Afg2b) of Rattus norvegicus (Rat).